Here is a 353-residue protein sequence, read N- to C-terminus: DNA integrity scanning protein DisA (353 aa).

The DAC domain maps to 6 to 144 (DKELMNILKI…GGIKYVLRDS (139 aa)). Residues Gly-73, Leu-91, and 104–108 (TRHRT) contribute to the ATP site.

The protein belongs to the DisA family. In terms of assembly, homooctamer. Mg(2+) is required as a cofactor.

The enzyme catalyses 2 ATP = 3',3'-c-di-AMP + 2 diphosphate. Functionally, participates in a DNA-damage check-point that is active prior to asymmetric division when DNA is damaged. DisA forms globular foci that rapidly scan along the chromosomes during sporulation, searching for lesions. When a lesion is present, DisA pauses at the lesion site. This triggers a cellular response that culminates in a temporary block in sporulation initiation. In terms of biological role, also has diadenylate cyclase activity, catalyzing the condensation of 2 ATP molecules into cyclic di-AMP (c-di-AMP). c-di-AMP acts as a signaling molecule that couples DNA integrity with progression of sporulation. The rise in c-di-AMP level generated by DisA while scanning the chromosome, operates as a positive signal that advances sporulation; upon encountering a lesion, the DisA focus arrests at the damaged site and halts c-di-AMP synthesis. In Clostridium botulinum (strain Loch Maree / Type A3), this protein is DNA integrity scanning protein DisA.